Consider the following 88-residue polypeptide: UPF0297 protein str1959 (88 aa).

It belongs to the UPF0297 family.

This chain is UPF0297 protein str1959, found in Streptococcus thermophilus (strain CNRZ 1066).